Consider the following 634-residue polypeptide: Threonine--tRNA ligase (634 aa).

Positions methionine 1–threonine 61 constitute a TGS domain. Positions aspartate 241–proline 532 are catalytic. Positions 332, 383, and 509 each coordinate Zn(2+).

It belongs to the class-II aminoacyl-tRNA synthetase family. As to quaternary structure, homodimer. The cofactor is Zn(2+).

It localises to the cytoplasm. The enzyme catalyses tRNA(Thr) + L-threonine + ATP = L-threonyl-tRNA(Thr) + AMP + diphosphate + H(+). Catalyzes the attachment of threonine to tRNA(Thr) in a two-step reaction: L-threonine is first activated by ATP to form Thr-AMP and then transferred to the acceptor end of tRNA(Thr). Also edits incorrectly charged L-seryl-tRNA(Thr). This Francisella tularensis subsp. tularensis (strain FSC 198) protein is Threonine--tRNA ligase.